Consider the following 435-residue polypeptide: MSEYRQATDAFASNPVESKQEIRNYTMNFGPQHPAAHGVLRLILEMDGETVVRADPHIGLLHRGTEKLAESKPFNQSVPYMDRLDYVSMMCNEHAYVRAIESLMGIEAPERAQYIRTMFDEITRIKNHLMWVGSNALDLGAMAVMLYAFREREELMDVYEAVSGARMHAAYYRPGGVYRDLPDRMPKYKESRWHKGGALTKLNAAREGSMLDFLENFTDTFPSRVDEYETLLTENRIWKQRTVDVGIISPDLARAWGMTGPMLRGSGIEWDLRKKQPYAKYDAVDFDVPVGTNGDCYDRYLVRVAEMRESNRIIKQCVKWLKANPGPVMVTNFKVAPPSREGMKDDMEALIHHFKLFSEGYCVPAGETYCAVEAPKGEFGCYLMSDGANKPFRVHLRAPGFAHLSSMDAVVRGYLLADVVAMIGTYDLVFGEVDR.

This sequence belongs to the complex I 49 kDa subunit family. In terms of assembly, NDH-1 is composed of 14 different subunits. Subunits NuoB, C, D, E, F, and G constitute the peripheral sector of the complex.

The protein localises to the cell inner membrane. It carries out the reaction a quinone + NADH + 5 H(+)(in) = a quinol + NAD(+) + 4 H(+)(out). NDH-1 shuttles electrons from NADH, via FMN and iron-sulfur (Fe-S) centers, to quinones in the respiratory chain. The immediate electron acceptor for the enzyme in this species is believed to be ubiquinone. Couples the redox reaction to proton translocation (for every two electrons transferred, four hydrogen ions are translocated across the cytoplasmic membrane), and thus conserves the redox energy in a proton gradient. The chain is NADH-quinone oxidoreductase subunit D from Xanthomonas campestris pv. campestris (strain 8004).